Reading from the N-terminus, the 396-residue chain is Elongation factor Tu (396 aa).

Residues Lys10 to Thr206 form the tr-type G domain. A G1 region spans residues Gly19–Thr26. Gly19 to Thr26 provides a ligand contact to GTP. Thr26 provides a ligand contact to Mg(2+). The G2 stretch occupies residues Gly60–Ser64. Residues Asp81–Gly84 are G3. Residues Asp81–His85 and Asn136–Asp139 each bind GTP. The segment at Asn136 to Asp139 is G4. Residues Ser174 to Leu176 form a G5 region.

It belongs to the TRAFAC class translation factor GTPase superfamily. Classic translation factor GTPase family. EF-Tu/EF-1A subfamily. As to quaternary structure, monomer.

The protein localises to the cytoplasm. The enzyme catalyses GTP + H2O = GDP + phosphate + H(+). In terms of biological role, GTP hydrolase that promotes the GTP-dependent binding of aminoacyl-tRNA to the A-site of ribosomes during protein biosynthesis. The sequence is that of Elongation factor Tu from Hydrogenovibrio crunogenus (strain DSM 25203 / XCL-2) (Thiomicrospira crunogena).